The primary structure comprises 233 residues: Antiholin-like protein LrgB (233 aa).

6 consecutive transmembrane segments (helical) span residues 5 to 25, 33 to 53, 63 to 83, 97 to 117, 152 to 172, and 212 to 232; these read LGIN…VIAT, GFFL…FLKL, IGGD…AIPL, IFGG…LVAI, LTSL…AKIV, and IAVV…APIL.

It belongs to the CidB/LrgB family. LrgB subfamily.

The protein localises to the cell membrane. Inhibits the expression or activity of extracellular murein hydrolases by interacting, possibly with LrgA, with the holin-like proteins CidA and/or CidB. The LrgAB and CidAB proteins may affect the proton motive force of the membrane. May be involved in programmed cell death (PCD), possibly triggering PCD in response to antibiotics and environmental stresses. The protein is Antiholin-like protein LrgB of Staphylococcus epidermidis (strain ATCC 35984 / DSM 28319 / BCRC 17069 / CCUG 31568 / BM 3577 / RP62A).